The primary structure comprises 72 residues: Heat-stable enterotoxin C (72 aa).

The N-terminal stretch at 1–19 (MKKIVFVLTLMLFSFGTLG) is a signal peptide. Intrachain disulfides connect cysteine 60–cysteine 65, cysteine 61–cysteine 69, and cysteine 64–cysteine 72.

This sequence belongs to the heat-stable enterotoxin family.

It is found in the secreted. In terms of biological role, toxin which activates the particulate form of guanylate cyclase and increases cyclic GMP levels within the host intestinal epithelial cells. Highly toxic. This Yersinia enterocolitica protein is Heat-stable enterotoxin C (ystC).